A 351-amino-acid chain; its full sequence is Phenylalanine--tRNA ligase alpha subunit (351 aa).

Glutamate 266 contacts Mg(2+).

The protein belongs to the class-II aminoacyl-tRNA synthetase family. Phe-tRNA synthetase alpha subunit type 1 subfamily. Tetramer of two alpha and two beta subunits. Mg(2+) is required as a cofactor.

It localises to the cytoplasm. The catalysed reaction is tRNA(Phe) + L-phenylalanine + ATP = L-phenylalanyl-tRNA(Phe) + AMP + diphosphate + H(+). The chain is Phenylalanine--tRNA ligase alpha subunit from Anaplasma marginale (strain St. Maries).